The chain runs to 94 residues: Exodeoxyribonuclease 7 small subunit (94 aa).

This sequence belongs to the XseB family. In terms of assembly, heterooligomer composed of large and small subunits.

It is found in the cytoplasm. The catalysed reaction is Exonucleolytic cleavage in either 5'- to 3'- or 3'- to 5'-direction to yield nucleoside 5'-phosphates.. Its function is as follows. Bidirectionally degrades single-stranded DNA into large acid-insoluble oligonucleotides, which are then degraded further into small acid-soluble oligonucleotides. The polypeptide is Exodeoxyribonuclease 7 small subunit (Trichormus variabilis (strain ATCC 29413 / PCC 7937) (Anabaena variabilis)).